Consider the following 368-residue polypeptide: Galactoside 2-alpha-L-fucosyltransferase SEC1 (368 aa).

A disordered region spans residues Met1–Gly20. Topologically, residues Met1–Arg31 are cytoplasmic. A helical transmembrane segment spans residues Phe32–Ser52. Residues Thr53–Pro368 are Lumenal-facing.

This sequence belongs to the glycosyltransferase 11 family. As to expression, kidney.

The protein localises to the golgi apparatus. It is found in the golgi stack membrane. The enzyme catalyses a ganglioside GM1 + GDP-beta-L-fucose = a ganglioside Fuc-GM1 + GDP + H(+). The protein operates within protein modification; protein glycosylation. Functionally, catalyzes the transfer of alpha 1,2-linked fucose to ganglioside GM1 and galacto-N-biose. This chain is Galactoside 2-alpha-L-fucosyltransferase SEC1, found in Bos taurus (Bovine).